The chain runs to 424 residues: MGHRVLVYVGALFLILFTIFPSSSALISSPDANPPYPKAISDLKESIVKGLGFQSEEVKVSGFDIRDALVGHSVSYEFDLEIDNKVLPFKLLEDVNRWEYVDLPIFQVEQPSENGLVPMRNKKTSSDDVLPVLAPFQLSGPMELWIQDANNMRLSLPYDVDAGVLKKVILADGAVVTVKGARSVSLRHPIDLPLPLNQSSNEFASGLLSLAEQLRRASTDQESPVLSLRIVGPTSLASTSQSPDNKLKLKRLAPGLVELSSMSKDKRSLSTIGANAMTTVLTPREFTTMWPITSINGSNANLLGFEKLLTSVLGPKAQEKGSFKVLKAKVAAQTFMKIGFGIEKKLKEADVEGLSFPEWRTKPETMRMHFEVLAKVDGENVIPENVMRVDPIPLEDTIAQNVITGNVTMSKLPIIESPPSPFTL.

A signal peptide spans 1 to 25 (MGHRVLVYVGALFLILFTIFPSSSA). Residues N197, N296, and N406 are each glycosylated (N-linked (GlcNAc...) asparagine).

In terms of tissue distribution, restricted to pollen grains at high levels.

Its subcellular location is the endoplasmic reticulum. Involved in the regulation of pollen surface morphology, probably by modulating the secretion of proteins and/or lipids during pollen development. This is Protein TUNICAMYCIN INDUCED 1 from Arabidopsis thaliana (Mouse-ear cress).